A 762-amino-acid chain; its full sequence is 5-methyltetrahydropteroyltriglutamate--homocysteine methyltransferase (762 aa).

Residues 18–21 (REWK) and Lys-112 each bind 5-methyltetrahydropteroyltri-L-glutamate. Residues 435-437 (IGS) and Glu-488 contribute to the L-homocysteine site. Residues 435–437 (IGS) and Glu-488 each bind L-methionine. 5-methyltetrahydropteroyltri-L-glutamate is bound by residues 519–520 (RC) and Trp-565. Asp-603 is a binding site for L-homocysteine. Position 603 (Asp-603) interacts with L-methionine. Residue Glu-609 participates in 5-methyltetrahydropteroyltri-L-glutamate binding. Residues His-645, Cys-647, and Glu-669 each coordinate Zn(2+). The Proton donor role is filled by His-698. Cys-719 carries the S-bacillithiol cysteine disulfide modification. Cys-730 is a Zn(2+) binding site.

It belongs to the vitamin-B12 independent methionine synthase family. Zn(2+) serves as cofactor. In terms of processing, in response to oxidative stress, Cys-719 can react with bacillithiol (BSH) to form mixed disulfides. S-bacillithiolation leads to loss of catalytic activity and methionine auxotrophy.

It catalyses the reaction 5-methyltetrahydropteroyltri-L-glutamate + L-homocysteine = tetrahydropteroyltri-L-glutamate + L-methionine. It participates in amino-acid biosynthesis; L-methionine biosynthesis via de novo pathway; L-methionine from L-homocysteine (MetE route): step 1/1. Its function is as follows. Catalyzes the transfer of a methyl group from 5-methyltetrahydrofolate to homocysteine resulting in methionine formation. This Bacillus subtilis (strain 168) protein is 5-methyltetrahydropteroyltriglutamate--homocysteine methyltransferase.